Consider the following 181-residue polypeptide: Adenylate kinase (181 aa).

10-15 is an ATP binding site; sequence GAGKGT. The segment at 30-59 is NMP; sequence STGDLFRSNISEGTELGLQAKQYLDAGDLV. AMP-binding positions include T31, R36, 57–59, 85–88, and Q92; these read DLV and GFPR. The interval 126–132 is LID; the sequence is GRGRADD. An ATP-binding site is contributed by R127. 2 residues coordinate AMP: R129 and R140. G166 is a binding site for ATP.

Belongs to the adenylate kinase family. As to quaternary structure, monomer.

It is found in the cytoplasm. The catalysed reaction is AMP + ATP = 2 ADP. Its pathway is purine metabolism; AMP biosynthesis via salvage pathway; AMP from ADP: step 1/1. Its function is as follows. Catalyzes the reversible transfer of the terminal phosphate group between ATP and AMP. Plays an important role in cellular energy homeostasis and in adenine nucleotide metabolism. The polypeptide is Adenylate kinase (Mycobacteroides abscessus (strain ATCC 19977 / DSM 44196 / CCUG 20993 / CIP 104536 / JCM 13569 / NCTC 13031 / TMC 1543 / L948) (Mycobacterium abscessus)).